Consider the following 161-residue polypeptide: RNA pyrophosphohydrolase (161 aa).

The 147-residue stretch at 9–155 folds into the Nudix hydrolase domain; sequence PYRPCVGVML…KRRVYRQVVD (147 aa). Positions 44–65 match the Nudix box motif; it reads GGIDDGEELHPAALRELSEETG.

The protein belongs to the Nudix hydrolase family. RppH subfamily. Requires a divalent metal cation as cofactor.

Functionally, accelerates the degradation of transcripts by removing pyrophosphate from the 5'-end of triphosphorylated RNA, leading to a more labile monophosphorylated state that can stimulate subsequent ribonuclease cleavage. The chain is RNA pyrophosphohydrolase from Novosphingobium aromaticivorans (strain ATCC 700278 / DSM 12444 / CCUG 56034 / CIP 105152 / NBRC 16084 / F199).